Here is a 135-residue protein sequence, read N- to C-terminus: DNA-directed RNA polymerase subunit omega (135 aa).

The protein belongs to the RNA polymerase subunit omega family. In terms of assembly, the RNAP catalytic core consists of 2 alpha, 1 beta, 1 beta' and 1 omega subunit. When a sigma factor is associated with the core the holoenzyme is formed, which can initiate transcription.

It carries out the reaction RNA(n) + a ribonucleoside 5'-triphosphate = RNA(n+1) + diphosphate. Functionally, promotes RNA polymerase assembly. Latches the N- and C-terminal regions of the beta' subunit thereby facilitating its interaction with the beta and alpha subunits. In Rhizobium meliloti (strain 1021) (Ensifer meliloti), this protein is DNA-directed RNA polymerase subunit omega.